The chain runs to 213 residues: Thymidylate kinase (213 aa).

9–16 (GLEGAGKS) lines the ATP pocket.

It belongs to the thymidylate kinase family.

It carries out the reaction dTMP + ATP = dTDP + ADP. Phosphorylation of dTMP to form dTDP in both de novo and salvage pathways of dTTP synthesis. This is Thymidylate kinase from Aeromonas hydrophila subsp. hydrophila (strain ATCC 7966 / DSM 30187 / BCRC 13018 / CCUG 14551 / JCM 1027 / KCTC 2358 / NCIMB 9240 / NCTC 8049).